Reading from the N-terminus, the 107-residue chain is Ig kappa chain V-VI region XRPC 24 (107 aa).

Positions 1–23 (EIVLTQSPAITAASLGQKVTITC) are framework-1. An intrachain disulfide couples C23 to C87. The interval 24–33 (SASSSVSYMH) is complementarity-determining-1. Residues 34 to 48 (WYQQKSGTSPKPWIY) form a framework-2 region. The tract at residues 49 to 55 (EISKLAS) is complementarity-determining-2. The segment at 56–87 (GVPARFSGSGSGTSYSLTISSMEAEDAAIYYC) is framework-3. Residues 88–96 (QQWNYPLIT) are complementarity-determining-3. Residues 97–106 (FGSGTKLEIK) are framework-4.

The chain is Ig kappa chain V-VI region XRPC 24 from Mus musculus (Mouse).